Here is a 587-residue protein sequence, read N- to C-terminus: 5-aminolevulinate synthase, erythroid-specific, mitochondrial (587 aa).

The transit peptide at 1-49 (MVTAAMLLQCCPVLARGPTSLLGKVVKTHQFLFGIGRCPILATQGPNCS) directs the protein to the mitochondrion. Succinyl-CoA is bound at residue Arg163. 2 residues coordinate pyridoxal 5'-phosphate: Cys258 and Phe259. Residues Ser280 and Lys299 each coordinate succinyl-CoA. Positions 332, 360, and 388 each coordinate pyridoxal 5'-phosphate. Residue Lys391 is part of the active site. N6-(pyridoxal phosphate)lysine is present on Lys391. 2 residues coordinate pyridoxal 5'-phosphate: Thr420 and Thr421. Thr508 provides a ligand contact to succinyl-CoA.

It belongs to the class-II pyridoxal-phosphate-dependent aminotransferase family. In terms of assembly, homodimer. Interacts with SUCLA2. Interacts with SUCLA2. Pyridoxal 5'-phosphate is required as a cofactor. Erythroid-specific.

Its subcellular location is the mitochondrion inner membrane. The enzyme catalyses succinyl-CoA + glycine + H(+) = 5-aminolevulinate + CO2 + CoA. The protein operates within porphyrin-containing compound metabolism; protoporphyrin-IX biosynthesis; 5-aminolevulinate from glycine: step 1/1. Down-regulated by itaconyl-CoA which acts as a competitive inhibitor of succinyl-CoA substrate. Its function is as follows. Catalyzes the pyridoxal 5'-phosphate (PLP)-dependent condensation of succinyl-CoA and glycine to form aminolevulinic acid (ALA), with CoA and CO2 as by-products. Contributes significantly to heme formation during erythropoiesis. Functionally, catalyzes the pyridoxal 5'-phosphate (PLP)-dependent condensation of succinyl-CoA and glycine to form aminolevulinic acid (ALA), with CoA and CO2 as by-products. Catalytic activity is 75-85% of isoform 1 activity. In terms of biological role, catalyzes the pyridoxal 5'-phosphate (PLP)-dependent condensation of succinyl-CoA and glycine to form aminolevulinic acid (ALA), with CoA and CO2 as by-products. Catalytic activity is 65-75% of isoform 1 activity. This chain is 5-aminolevulinate synthase, erythroid-specific, mitochondrial, found in Homo sapiens (Human).